The sequence spans 187 residues: Serine/arginine-rich splicing factor RSZ21 (187 aa).

Residues 2–73 (TRVYVGNLDP…WRVELSHKDK (72 aa)) form the RRM domain. 2 disordered regions span residues 68–89 (LSHK…IEDS) and 105–187 (RRGR…ANGV). Residues 89-106 (SKCYECGELGHFARECRR) form a CCHC-type zinc finger. Residues 107-122 (GRGSVRRRSPSPRRRR) show a composition bias toward basic residues. Phosphoserine occurs at positions 123, 132, 134, 140, 146, and 159. Residues 136–155 (RGRRSPPRRRSVTPPRRGRS) are compositionally biased toward basic residues. The span at 165–177 (SRRDSPRRRDSPY) shows a compositional bias: basic and acidic residues. Residues 178–187 (GRRSPYANGV) show a composition bias toward low complexity. A Phosphoserine modification is found at serine 181.

This sequence belongs to the splicing factor SR family. RSZ subfamily. As to quaternary structure, component of the spliceosome. Interacts with SNRNP35, AFC2, CYP59, RS2Z33 and RNU1. Interacts with MOS14. Extensively phosphorylated on serine residues in the RS domain. Phosphorylated by AFC2. As to expression, expressed in roots, leaves, flowers and siliques.

It is found in the nucleus speckle. Functionally, probably involved in intron recognition and spliceosome assembly. This is Serine/arginine-rich splicing factor RSZ21 (RSZ21) from Arabidopsis thaliana (Mouse-ear cress).